Reading from the N-terminus, the 238-residue chain is Sugar fermentation stimulation protein homolog (238 aa).

It belongs to the SfsA family.

This is Sugar fermentation stimulation protein homolog from Histophilus somni (strain 129Pt) (Haemophilus somnus).